We begin with the raw amino-acid sequence, 434 residues long: Alpha-enolase (434 aa).

Ser40 contributes to the Mg(2+) binding site. Positions 158 and 167 each coordinate substrate. The active-site Proton donor is Glu210. Mg(2+)-binding residues include Asp245, Glu293, and Asp318. Substrate-binding positions include Glu293, Asp318, 370–373, and Lys394; that span reads SHRS.

This sequence belongs to the enolase family. Homodimer. Mg(2+) is required as a cofactor.

It localises to the cytoplasm. The catalysed reaction is (2R)-2-phosphoglycerate = phosphoenolpyruvate + H2O. It participates in carbohydrate degradation; glycolysis; pyruvate from D-glyceraldehyde 3-phosphate: step 4/5. This is Alpha-enolase from Trachemys scripta elegans (Red-eared slider turtle).